Reading from the N-terminus, the 146-residue chain is Flagellar assembly factor FliW (146 aa).

The protein belongs to the FliW family. Interacts with translational regulator CsrA and flagellin(s).

Its subcellular location is the cytoplasm. In terms of biological role, acts as an anti-CsrA protein, binds CsrA and prevents it from repressing translation of its target genes, one of which is flagellin. Binds to flagellin and participates in the assembly of the flagellum. The chain is Flagellar assembly factor FliW from Azoarcus sp. (strain BH72).